A 270-amino-acid chain; its full sequence is 3-methyl-2-oxobutanoate hydroxymethyltransferase (270 aa).

Mg(2+) is bound by residues Asp-43 and Asp-82. Residues 43–44 (DS), Asp-82, and Lys-112 contribute to the 3-methyl-2-oxobutanoate site. Glu-114 is a Mg(2+) binding site. Glu-179 functions as the Proton acceptor in the catalytic mechanism.

Belongs to the PanB family. As to quaternary structure, homodecamer; pentamer of dimers. It depends on Mg(2+) as a cofactor.

Its subcellular location is the cytoplasm. It carries out the reaction 3-methyl-2-oxobutanoate + (6R)-5,10-methylene-5,6,7,8-tetrahydrofolate + H2O = 2-dehydropantoate + (6S)-5,6,7,8-tetrahydrofolate. It functions in the pathway cofactor biosynthesis; (R)-pantothenate biosynthesis; (R)-pantoate from 3-methyl-2-oxobutanoate: step 1/2. In terms of biological role, catalyzes the reversible reaction in which hydroxymethyl group from 5,10-methylenetetrahydrofolate is transferred onto alpha-ketoisovalerate to form ketopantoate. This is 3-methyl-2-oxobutanoate hydroxymethyltransferase from Oceanobacillus iheyensis (strain DSM 14371 / CIP 107618 / JCM 11309 / KCTC 3954 / HTE831).